A 316-amino-acid chain; its full sequence is MSEDLSKLHTSRMNKLQRKLRGEVGKAIGDYNMIEEGDRVMCCLSGGKDSYAMLDILLNLQQRAPIKFEIVAVNLDQKQPGFPEEVLPAYLDTLNVPYHIIEKDTYSVVREKIPEGQKTCSLCSRLRRGTLYGFAQKIGATKIALGHHRDDIIETLFLNMFFAGKQKAMPPKLLSDDGANMVIRPLAYSREKDIAEYAELKAFPIIPCNLCGSQENLKRAEVKDMLNLWDEHHPGRIESIFTAMQNTSPSQGVDREQFDFNSLQRDADAPLRGDVAESDLPAFDFVDVANNGHIDLDAAAKSRSENKIDIVSTYTP.

Residues 45 to 50 (SGGKDS) carry the PP-loop motif motif. Cys120, Cys123, and Cys211 together coordinate [4Fe-4S] cluster.

This sequence belongs to the TtcA family. In terms of assembly, homodimer. The cofactor is Mg(2+). Requires [4Fe-4S] cluster as cofactor.

It is found in the cytoplasm. The enzyme catalyses cytidine(32) in tRNA + S-sulfanyl-L-cysteinyl-[cysteine desulfurase] + AH2 + ATP = 2-thiocytidine(32) in tRNA + L-cysteinyl-[cysteine desulfurase] + A + AMP + diphosphate + H(+). It functions in the pathway tRNA modification. Its function is as follows. Catalyzes the ATP-dependent 2-thiolation of cytidine in position 32 of tRNA, to form 2-thiocytidine (s(2)C32). The sulfur atoms are provided by the cysteine/cysteine desulfurase (IscS) system. The chain is tRNA-cytidine(32) 2-sulfurtransferase from Shewanella sediminis (strain HAW-EB3).